A 332-amino-acid polypeptide reads, in one-letter code: Aquaporin Lacbi1:317173 (332 aa).

The segment covering 1-20 (MSGQHQITEQSSRNPLSRVS) has biased composition (polar residues). Residues 1-45 (MSGQHQITEQSSRNPLSRVSTLLPEKPLSPTSTYAGTQKHPEAPR) form a disordered region. Residues 1 to 66 (MSGQHQITEQ…RNAIRKPMAE (66 aa)) are Cytoplasmic-facing. The helical transmembrane segment at 67-87 (FFGVALLIIFGAGSACQVVLS) threads the bilayer. At 88–100 (TNPDVASSARGSF) the chain is on the extracellular side. A helical transmembrane segment spans residues 101–121 (LSINFGWAIGIAMGVWVSGGI). Over 122-144 (SGGHINPAITIAMATYRGFPWRK) the chain is Cytoplasmic. Positions 127-129 (NPA) match the NPA 1 motif. The chain crosses the membrane as a helical span at residues 145-165 (VPSYILAQVLGGVVGAGLVYA). The Extracellular portion of the chain corresponds to 166-199 (NYIHAIDIFEGGHHIRTQATASLFATYALPYMTQ). A helical membrane pass occupies residues 200-220 (ASCFFSEFLATAVLSMMVFAL). At 221–230 (TDKRNHSPTN) the chain is on the cytoplasmic side. A helical transmembrane segment spans residues 231-251 (GLLPFALFILFVGLGASLGME). At 252-283 (TAYALNPARDFGPRLFLAMAGYGKALFNYRSQ) the chain is on the extracellular side. An NPA 2 motif is present at residues 257 to 259 (NPA). Residues 284-304 (YWLWAPIIAPVLGAQAGGLLY) form a helical membrane-spanning segment. Residues 305–332 (DTFLNDGDNSPIKWRCASSQEHQLAEVV) lie on the Cytoplasmic side of the membrane.

Belongs to the MIP/aquaporin (TC 1.A.8) family.

It is found in the membrane. It catalyses the reaction H2O(in) = H2O(out). It carries out the reaction NH4(+)(in) = NH4(+)(out). Its function is as follows. Water channel required to facilitate the transport of water across membranes. Acts as the most efficient Laccaria water channel. In addition to water, also shows strong ammonium transport activity. May be involved in fungal nitrogen (ammonium) support of the plant host in symbiosis. In Laccaria bicolor (strain S238N-H82 / ATCC MYA-4686) (Bicoloured deceiver), this protein is Aquaporin Lacbi1:317173.